Here is a 256-residue protein sequence, read N- to C-terminus: Triosephosphate isomerase (256 aa).

9 to 11 (NWK) lines the substrate pocket. His-97 acts as the Electrophile in catalysis. The active-site Proton acceptor is the Glu-169. Residues Gly-175, Ser-214, and 235-236 (GG) contribute to the substrate site.

Belongs to the triosephosphate isomerase family. In terms of assembly, homodimer.

It localises to the cytoplasm. It catalyses the reaction D-glyceraldehyde 3-phosphate = dihydroxyacetone phosphate. It functions in the pathway carbohydrate biosynthesis; gluconeogenesis. The protein operates within carbohydrate degradation; glycolysis; D-glyceraldehyde 3-phosphate from glycerone phosphate: step 1/1. Involved in the gluconeogenesis. Catalyzes stereospecifically the conversion of dihydroxyacetone phosphate (DHAP) to D-glyceraldehyde-3-phosphate (G3P). The polypeptide is Triosephosphate isomerase (Aliivibrio fischeri (strain ATCC 700601 / ES114) (Vibrio fischeri)).